The chain runs to 444 residues: Elongation factor 1-alpha (444 aa).

A tr-type G domain is found at 15–236 (KPHLNLAVIG…ALDTFQPPPR (222 aa)). The interval 24–31 (GHVDNGKS) is G1. GTP is bound at residue 24-31 (GHVDNGKS). S31 provides a ligand contact to Mg(2+). The tract at residues 80–84 (GVTIE) is G2. Positions 101-104 (DLPG) are G3. Residues 101–105 (DLPGH) and 163–166 (NKMD) contribute to the GTP site. The G4 stretch occupies residues 163-166 (NKMD). Residues 202-204 (SAI) form a G5 region.

The protein belongs to the TRAFAC class translation factor GTPase superfamily. Classic translation factor GTPase family. EF-Tu/EF-1A subfamily.

Its subcellular location is the cytoplasm. It carries out the reaction GTP + H2O = GDP + phosphate + H(+). GTP hydrolase that promotes the GTP-dependent binding of aminoacyl-tRNA to the A-site of ribosomes during protein biosynthesis. This is Elongation factor 1-alpha from Pyrobaculum islandicum (strain DSM 4184 / JCM 9189 / GEO3).